The following is a 423-amino-acid chain: D-tagatose-1,6-bisphosphate aldolase subunit GatZ (423 aa).

It belongs to the GatZ/KbaZ family. GatZ subfamily. Forms a complex with GatY.

The protein operates within carbohydrate metabolism; D-tagatose 6-phosphate degradation; D-glyceraldehyde 3-phosphate and glycerone phosphate from D-tagatose 6-phosphate: step 2/2. Its function is as follows. Component of the tagatose-1,6-bisphosphate aldolase GatYZ that is required for full activity and stability of the Y subunit. Could have a chaperone-like function for the proper and stable folding of GatY. When expressed alone, GatZ does not show any aldolase activity. Is involved in the catabolism of galactitol. The protein is D-tagatose-1,6-bisphosphate aldolase subunit GatZ of Salmonella enteritidis PT4 (strain P125109).